Here is a 752-residue protein sequence, read N- to C-terminus: Ribonucleases P/MRP protein subunit popl-1 (752 aa).

The interval 638 to 663 (KTTKRKRVNRKKRESKKRRKIEQEKR) is disordered. Over residues 640 to 657 (TKRKRVNRKKRESKKRRK) the composition is skewed to basic residues.

As to quaternary structure, component of nuclear RNase P and RNase MRP ribonucleoproteins. Several subunits of RNase P are also part of the RNase MRP complex.

Its subcellular location is the nucleus. It is found in the nucleolus. It carries out the reaction Endonucleolytic cleavage of RNA, removing 5'-extranucleotides from tRNA precursor.. In terms of biological role, component of ribonuclease P, a ribonucleoprotein complex that generates mature tRNA molecules by cleaving their 5'-ends. Also a component of the MRP ribonuclease complex, which cleaves pre-rRNA sequences. The sequence is that of Ribonucleases P/MRP protein subunit popl-1 from Caenorhabditis elegans.